Reading from the N-terminus, the 247-residue chain is Segregation and condensation protein A (247 aa).

The protein belongs to the ScpA family. Component of a cohesin-like complex composed of ScpA, ScpB and the Smc homodimer, in which ScpA and ScpB bind to the head domain of Smc. The presence of the three proteins is required for the association of the complex with DNA.

The protein localises to the cytoplasm. Its function is as follows. Participates in chromosomal partition during cell division. May act via the formation of a condensin-like complex containing Smc and ScpB that pull DNA away from mid-cell into both cell halves. This chain is Segregation and condensation protein A, found in Bacillus cereus (strain 03BB102).